Here is a 215-residue protein sequence, read N- to C-terminus: HTH-type transcriptional repressor FabR (215 aa).

The 61-residue stretch at 10–70 folds into the HTH tetR-type domain; the sequence is KTRRSLVEAA…TMVDESGLML (61 aa). Residues 33-52 constitute a DNA-binding region (H-T-H motif); that stretch reads SLREVAREAVIAPTSFYRHF.

Homodimer.

The protein localises to the cytoplasm. Its function is as follows. Represses the transcription of fabB, involved in unsaturated fatty acid (UFA) biosynthesis. By controlling UFA production, FabR directly influences the physical properties of the membrane bilayer. The chain is HTH-type transcriptional repressor FabR from Escherichia coli (strain K12 / MC4100 / BW2952).